The sequence spans 407 residues: Argininosuccinate synthase (407 aa).

ATP is bound by residues 11-19 and Ala-39; that span reads AYSGGLDTS. Residues Tyr-90 and Ser-95 each coordinate L-citrulline. Residue Gly-120 coordinates ATP. The L-aspartate site is built by Thr-122, Asn-126, and Asp-127. Residue Asn-126 participates in L-citrulline binding. L-citrulline-binding residues include Arg-130, Ser-179, Ser-188, Glu-264, and Tyr-276.

Belongs to the argininosuccinate synthase family. Type 1 subfamily. In terms of assembly, homotetramer.

The protein localises to the cytoplasm. It catalyses the reaction L-citrulline + L-aspartate + ATP = 2-(N(omega)-L-arginino)succinate + AMP + diphosphate + H(+). Its pathway is amino-acid biosynthesis; L-arginine biosynthesis; L-arginine from L-ornithine and carbamoyl phosphate: step 2/3. The polypeptide is Argininosuccinate synthase (Roseiflexus sp. (strain RS-1)).